Consider the following 727-residue polypeptide: Elongation factor 2 (727 aa).

The tr-type G domain occupies 19-260 (DQIRNIGICA…MVVTHLPNPV (242 aa)). GTP is bound by residues 28–35 (AHIDHGKT), 94–98 (DTPGH), and 148–151 (NKVD). H603 is subject to Diphthamide.

This sequence belongs to the TRAFAC class translation factor GTPase superfamily. Classic translation factor GTPase family. EF-G/EF-2 subfamily.

The protein localises to the cytoplasm. Its function is as follows. Catalyzes the GTP-dependent ribosomal translocation step during translation elongation. During this step, the ribosome changes from the pre-translocational (PRE) to the post-translocational (POST) state as the newly formed A-site-bound peptidyl-tRNA and P-site-bound deacylated tRNA move to the P and E sites, respectively. Catalyzes the coordinated movement of the two tRNA molecules, the mRNA and conformational changes in the ribosome. This chain is Elongation factor 2, found in Methanococcus aeolicus (strain ATCC BAA-1280 / DSM 17508 / OCM 812 / Nankai-3).